The sequence spans 419 residues: Tyrosine--tRNA ligase 1 (419 aa).

Residue Tyr35 participates in L-tyrosine binding. Positions 40–49 (PTAGSLHIGH) match the 'HIGH' region motif. Residues Tyr172 and Gln176 each coordinate L-tyrosine. The short motif at 232-236 (KFGKT) is the 'KMSKS' region element. Lys235 contacts ATP. The S4 RNA-binding domain occupies 353 to 418 (QDLVELLIES…KKHFCLVKRA (66 aa)).

This sequence belongs to the class-I aminoacyl-tRNA synthetase family. TyrS type 1 subfamily. In terms of assembly, homodimer.

It is found in the cytoplasm. The enzyme catalyses tRNA(Tyr) + L-tyrosine + ATP = L-tyrosyl-tRNA(Tyr) + AMP + diphosphate + H(+). In terms of biological role, catalyzes the attachment of tyrosine to tRNA(Tyr) in a two-step reaction: tyrosine is first activated by ATP to form Tyr-AMP and then transferred to the acceptor end of tRNA(Tyr). The polypeptide is Tyrosine--tRNA ligase 1 (Vibrio parahaemolyticus serotype O3:K6 (strain RIMD 2210633)).